Here is a 473-residue protein sequence, read N- to C-terminus: UDP-N-acetylmuramate--L-alanine ligase (473 aa).

112–118 (GTHGKTT) contributes to the ATP binding site.

The protein belongs to the MurCDEF family.

Its subcellular location is the cytoplasm. The enzyme catalyses UDP-N-acetyl-alpha-D-muramate + L-alanine + ATP = UDP-N-acetyl-alpha-D-muramoyl-L-alanine + ADP + phosphate + H(+). It functions in the pathway cell wall biogenesis; peptidoglycan biosynthesis. Functionally, cell wall formation. The protein is UDP-N-acetylmuramate--L-alanine ligase of Nitrosomonas eutropha (strain DSM 101675 / C91 / Nm57).